The primary structure comprises 144 residues: MELNNLKPAEGAKHAKRRVGRGIGSGLGKTAGRGHKGQKSRSGGFHKVGFEGGQMPLQRRLPKRGFTSLTKEFVGEVRLSDLEKLPVDEIDLLALKQAGLVGELIKSAKIIATGELKRKVVVKGLGATKGARAAIEAAGGSFAE.

The tract at residues 1-57 (MELNNLKPAEGAKHAKRRVGRGIGSGLGKTAGRGHKGQKSRSGGFHKVGFEGGQMPL) is disordered. The segment covering 21–31 (RGIGSGLGKTA) has biased composition (gly residues).

Belongs to the universal ribosomal protein uL15 family. As to quaternary structure, part of the 50S ribosomal subunit.

Functionally, binds to the 23S rRNA. The sequence is that of Large ribosomal subunit protein uL15 from Paraburkholderia xenovorans (strain LB400).